Consider the following 113-residue polypeptide: U11-theraphotoxin-Hhn1u (113 aa).

A signal peptide spans Met-1–Ala-21. Residues Asp-22–Arg-74 constitute a propeptide that is removed on maturation. Disulfide bonds link Cys-75–Cys-90, Cys-82–Cys-95, and Cys-89–Cys-110.

It belongs to the neurotoxin 14 (magi-1) family. 01 (HNTX-16) subfamily. As to expression, expressed by the venom gland.

The protein resides in the secreted. Functionally, probable ion channel inhibitor. The sequence is that of U11-theraphotoxin-Hhn1u from Cyriopagopus hainanus (Chinese bird spider).